Reading from the N-terminus, the 438-residue chain is Trigger factor (438 aa).

The 86-residue stretch at 162-247 folds into the PPIase FKBP-type domain; the sequence is GDRVNINYQG…LNKVEAPKLP (86 aa).

Belongs to the FKBP-type PPIase family. Tig subfamily.

It is found in the cytoplasm. The enzyme catalyses [protein]-peptidylproline (omega=180) = [protein]-peptidylproline (omega=0). In terms of biological role, involved in protein export. Acts as a chaperone by maintaining the newly synthesized protein in an open conformation. Functions as a peptidyl-prolyl cis-trans isomerase. This chain is Trigger factor, found in Nitrosomonas eutropha (strain DSM 101675 / C91 / Nm57).